The primary structure comprises 125 residues: Holo-[acyl-carrier-protein] synthase (125 aa).

Mg(2+)-binding residues include Asp-8 and Glu-57.

The protein belongs to the P-Pant transferase superfamily. AcpS family. Mg(2+) serves as cofactor.

It is found in the cytoplasm. The catalysed reaction is apo-[ACP] + CoA = holo-[ACP] + adenosine 3',5'-bisphosphate + H(+). In terms of biological role, transfers the 4'-phosphopantetheine moiety from coenzyme A to a Ser of acyl-carrier-protein. This is Holo-[acyl-carrier-protein] synthase from Aromatoleum aromaticum (strain DSM 19018 / LMG 30748 / EbN1) (Azoarcus sp. (strain EbN1)).